A 172-amino-acid polypeptide reads, in one-letter code: Large ribosomal subunit protein uL10 (172 aa).

The protein belongs to the universal ribosomal protein uL10 family. As to quaternary structure, part of the ribosomal stalk of the 50S ribosomal subunit. The N-terminus interacts with L11 and the large rRNA to form the base of the stalk. The C-terminus forms an elongated spine to which L12 dimers bind in a sequential fashion forming a multimeric L10(L12)X complex.

Forms part of the ribosomal stalk, playing a central role in the interaction of the ribosome with GTP-bound translation factors. This is Large ribosomal subunit protein uL10 from Leifsonia xyli subsp. xyli (strain CTCB07).